Consider the following 353-residue polypeptide: Inactive ADP-ribosyltransferase ARH2 (353 aa).

The residue at position 27 (S27) is a Phosphoserine.

This sequence belongs to the ADP-ribosylglycohydrolase family.

The protein resides in the cytoplasm. The protein localises to the myofibril. Its subcellular location is the sarcomere. Functionally, required for myofibril assembly and outgrowth of the cardiac chambers in the developing heart. Appears to be catalytically inactive, showing no activity against O-acetyl-ADP-ribose. The polypeptide is Inactive ADP-ribosyltransferase ARH2 (Adprhl1) (Rattus norvegicus (Rat)).